We begin with the raw amino-acid sequence, 556 residues long: Arginine--tRNA ligase 1 (556 aa).

Residues 132–142 (ANPTGDLHLGH) carry the 'HIGH' region motif.

The protein belongs to the class-I aminoacyl-tRNA synthetase family. In terms of assembly, monomer.

The protein resides in the cytoplasm. It carries out the reaction tRNA(Arg) + L-arginine + ATP = L-arginyl-tRNA(Arg) + AMP + diphosphate. The protein is Arginine--tRNA ligase 1 of Bacillus anthracis.